A 295-amino-acid polypeptide reads, in one-letter code: Thioredoxin-related transmembrane protein 2 (295 aa).

Residues 1-48 form the signal peptide; it reads MAVLAPLIALVYSVPRLSRWLARPYCLLSALLSIAFLLVRKLPPICNG. Residues 49–102 are Extracellular-facing; sequence LPTQREDGNPCDFDWREVEILMFLSAIVMMKNRRSITVEQHVGNIFMFSKVANA. Residues 103–125 traverse the membrane as a helical segment; the sequence is ILFFRLDIRMGLLYLTLCIVFLM. Residues 114 to 269 enclose the Thioredoxin domain; the sequence is LLYLTLCIVF…LYQRAKKLSK (156 aa). Residues 126 to 295 lie on the Cytoplasmic side of the membrane; the sequence is TCKPPLYMGP…VPDGENKKDK (170 aa). 2 positions are modified to phosphoserine: S211 and S243. Positions 266–295 are disordered; that stretch reads KLSKGGDMSEEKPGNPTPTAVPDGENKKDK. The Di-lysine motif signature appears at 292-295; that stretch reads KKDK.

In terms of assembly, monomer. Homodimer; disulfide-linked. Occurs in both reduced and oxidized monomeric form. Oxidative conditions increase homodimerization. Interacts with CANX. Interacts with ATP2A2.

It is found in the endoplasmic reticulum membrane. Its subcellular location is the mitochondrion membrane. Functionally, endoplasmic reticulum and mitochondria-associated protein that probably functions as a regulator of cellular redox state and thereby regulates protein post-translational modification, protein folding and mitochondrial activity. Indirectly regulates neuronal proliferation, migration, and organization in the developing brain. This is Thioredoxin-related transmembrane protein 2 (Tmx2) from Rattus norvegicus (Rat).